Here is a 179-residue protein sequence, read N- to C-terminus: Calcineurin subunit B type 2 (179 aa).

Gly-2 is lipidated: N-myristoyl glycine. EF-hand domains lie at 18-53 (EEIRRLGKSFRKLDLDKSGSLSIEEFMRLPELQQNP), 57-85 (RVIDIFDTDGNGEVDFHEFIVGTSQFSVK), 87-122 (DEEQKLRFAFRIYDMDNDGFISNGELFQVLKMMVGN), and 128-163 (QLQQLVDKSILVLDKDGDGRISFEEFSDVVKTMEIH). Asp-31, Asp-33, Ser-35, Ser-37, Glu-42, Asp-63, Asp-65, Asn-67, Glu-69, Glu-74, Asp-100, Asp-102, Asp-104, and Glu-111 together coordinate Ca(2+). The calcineurin A binding stretch occupies residues 131 to 136 (QLVDKS). Ca(2+) contacts are provided by Asp-141, Asp-143, Asp-145, Arg-147, and Glu-152.

Belongs to the calcineurin regulatory subunit family. Forms a complex composed of a calmodulin-dependent catalytic subunit (also known as calcineurin A) and a regulatory Ca(2+)-binding subunit (also known as calcineurin B). There are three catalytic subunits, each encoded by a separate gene (PPP3CA, PPP3CB, and PPP3CC) and two regulatory subunits which are also encoded by separate genes (PPP3R1 and PPP3R2). Interacts with SPATA33 (via PQIIIT motif). As to expression, expressed in osteoblasts and bone marrow (at protein level). Expressed in the testis. Expressed in the sperm midpiece in a SPATA33-dependent manner (at protein level).

It is found in the mitochondrion. Regulatory subunit of calcineurin, a calcium-dependent, calmodulin stimulated protein phosphatase. Confers calcium sensitivity. This chain is Calcineurin subunit B type 2 (Ppp3r2), found in Mus musculus (Mouse).